We begin with the raw amino-acid sequence, 285 residues long: Pantothenate synthetase (285 aa).

Residue 30–37 (MGNLHDGH) participates in ATP binding. His-37 (proton donor) is an active-site residue. Gln-61 provides a ligand contact to (R)-pantoate. A beta-alanine-binding site is contributed by Gln-61. 149 to 152 (GEKD) is an ATP binding site. Gln-155 contacts (R)-pantoate. Residues Ile-178 and 186 to 189 (FSSR) each bind ATP.

The protein belongs to the pantothenate synthetase family. Homodimer.

The protein localises to the cytoplasm. The enzyme catalyses (R)-pantoate + beta-alanine + ATP = (R)-pantothenate + AMP + diphosphate + H(+). It participates in cofactor biosynthesis; (R)-pantothenate biosynthesis; (R)-pantothenate from (R)-pantoate and beta-alanine: step 1/1. In terms of biological role, catalyzes the condensation of pantoate with beta-alanine in an ATP-dependent reaction via a pantoyl-adenylate intermediate. In Buchnera aphidicola subsp. Schizaphis graminum (strain Sg), this protein is Pantothenate synthetase.